Here is a 746-residue protein sequence, read N- to C-terminus: Ferric enterobactin receptor (746 aa).

The signal sequence occupies residues 1 to 25 (MSSRALPAVPFLLLSSCLLANAVHA). The TonB box signature appears at 39–44 (QTVVAT). The TBDR plug domain occupies 47–174 (EETKQAPGVS…AGGVVNIITK (128 aa)). Disordered regions lie at residues 82-102 (VNLT…IDIR), 235-254 (GHES…GREG), and 397-424 (QKLD…KNRS). Polar residues predominate over residues 84-98 (LTGNSSSGQRGNNRQ). The TBDR beta-barrel domain occupies 179–746 (ETHGNLSVYS…TFYTSLTASF (568 aa)). The segment covering 402–411 (PSSNTQNTEE) has biased composition (polar residues). The short motif at 729–746 (ATYNEPGRTFYTSLTASF) is the TonB C-terminal box element.

Belongs to the TonB-dependent receptor family.

The protein localises to the cell outer membrane. Specific receptor for the siderophore ferric enterobactin. The protein is Ferric enterobactin receptor (pfeA) of Pseudomonas aeruginosa (strain ATCC 15692 / DSM 22644 / CIP 104116 / JCM 14847 / LMG 12228 / 1C / PRS 101 / PAO1).